The chain runs to 115 residues: Nitrogen regulatory protein P-II 2 (115 aa).

Y54 is modified (O-UMP-tyrosine).

The protein belongs to the P(II) protein family.

Could be involved in the regulation of nitrogen fixation. The protein is Nitrogen regulatory protein P-II 2 of Methanothermobacter thermautotrophicus (strain ATCC 29096 / DSM 1053 / JCM 10044 / NBRC 100330 / Delta H) (Methanobacterium thermoautotrophicum).